The primary structure comprises 361 residues: MMMPELPEDLLVEILCRVPATSLKRLRSTCKLWNHLYNDKRFKSKHCHKAPRQSLILMWKNFGFSSISINLQRVSPIEVTGELNLIDHHSSLGMFRNSPLCQTSGLLLCVNVEKINTRLVVWNPCTGKTKWIQHRRMGYICNYALGSYQDKKSDNNSYKILSHGIYGGQEFEIYEINSNSWRILDVTVDSSLYIENVSLKGKTYWFATDGNDKPCDLFLICFDYTTERFERLCLPYQIPYFRNTSLSVVKEEKLSVLLQPSLTSKTQIWVTNKIGEAKVLSWIKFLTVDLKPEIKYGIKFLVDEENKVLVYEQNFVINGKNNMIYVVGEDNEVREVVFRVGLKPLFFYYVPSLTQIRQGND.

The F-box domain maps to 1–45 (MMMPELPEDLLVEILCRVPATSLKRLRSTCKLWNHLYNDKRFKSK).

The protein is Putative F-box protein At3g25460 of Arabidopsis thaliana (Mouse-ear cress).